Consider the following 307-residue polypeptide: Olfactory receptor 13G1 (307 aa).

Topologically, residues 1–22 are extracellular; it reads MNHSVVTEFIILGLTKKPELQG. Asn2 is a glycosylation site (N-linked (GlcNAc...) asparagine). A helical membrane pass occupies residues 23–43; that stretch reads IIFLFFLIVYLVAFLGNMLII. Topologically, residues 44 to 51 are cytoplasmic; that stretch reads IAKIYNNT. The helical transmembrane segment at 52–72 threads the bilayer; the sequence is LHTPMYVFLLTLAVVDIICTT. At 73 to 96 the chain is on the extracellular side; it reads SIIPKMLGTMLTSENTISYAGCMS. Cysteines 94 and 186 form a disulfide. A helical membrane pass occupies residues 97–117; that stretch reads QLFLFTWSLGAEMVLFTTMAY. Residues 118–136 are Cytoplasmic-facing; sequence DRYVAICFPLHYSTIMNHH. A helical membrane pass occupies residues 137–157; that stretch reads MCVALLSMVMAIAVTNSWVHT. Residues 158–194 are Extracellular-facing; the sequence is ALIMRLTFCGPNTIDHFFCEIPPLLALSCSPVRINEV. A helical membrane pass occupies residues 195-214; that stretch reads MVYVADITLAIGDFILTCIS. Topologically, residues 215-234 are cytoplasmic; the sequence is YGFIIVAILRIRTVEGKRKA. The helical transmembrane segment at 235–255 threads the bilayer; the sequence is FSTCSSHLTVVTLYYSPVIYT. The Extracellular portion of the chain corresponds to 256-268; it reads YIRPASSYTFERD. A helical transmembrane segment spans residues 269 to 289; that stretch reads KVVAALYTLVTPTLNPMVYSF. Residues 290–307 lie on the Cytoplasmic side of the membrane; sequence QNREMQAGIRKVFAFLKH.

This sequence belongs to the G-protein coupled receptor 1 family.

Its subcellular location is the cell membrane. Functionally, odorant receptor. The sequence is that of Olfactory receptor 13G1 (OR13G1) from Homo sapiens (Human).